Reading from the N-terminus, the 273-residue chain is HTH-type transcriptional activator RhaS (273 aa).

Residues 174–272 (YQLLDWLQNN…SQSPRDLRSQ (99 aa)) form the HTH araC/xylS-type domain. DNA-binding regions (H-T-H motif) lie at residues 191–212 (PELADRFALPLRTLHRQLKNKT) and 239–262 (VTDIAYLCGFGDSNHFSTLFKREF).

Binds DNA as a dimer.

The protein localises to the cytoplasm. In terms of biological role, activates expression of the rhaBAD and rhaT operons. The protein is HTH-type transcriptional activator RhaS of Yersinia pestis bv. Antiqua (strain Antiqua).